The sequence spans 326 residues: Pyruvate dehydrogenase E1 component subunit alpha (326 aa).

In terms of assembly, heterodimer of an alpha and a beta chain. Thiamine diphosphate serves as cofactor.

It carries out the reaction N(6)-[(R)-lipoyl]-L-lysyl-[protein] + pyruvate + H(+) = N(6)-[(R)-S(8)-acetyldihydrolipoyl]-L-lysyl-[protein] + CO2. In terms of biological role, the pyruvate dehydrogenase complex catalyzes the overall conversion of pyruvate to acetyl-CoA and CO(2). It contains multiple copies of three enzymatic components: pyruvate dehydrogenase (E1), dihydrolipoamide acetyltransferase (E2) and lipoamide dehydrogenase (E3). In Rickettsia felis (strain ATCC VR-1525 / URRWXCal2) (Rickettsia azadi), this protein is Pyruvate dehydrogenase E1 component subunit alpha (pdhA).